A 642-amino-acid polypeptide reads, in one-letter code: Sodium- and chloride-dependent neutral and basic amino acid transporter B(0+) (642 aa).

Topologically, residues 1–44 are cytoplasmic; the sequence is MDKLKCPSFFKCREKEKVSASSENFHVGENDENQDRGNWSKKSD. A run of 3 helical transmembrane segments spans residues 45 to 65, 72 to 92, and 110 to 130; these read YLLSMIGYAVGLGNVWRFPYL, GAFLIPYAIMLALAGLPLFFL, and ILPLFQGVGITMVLISIFVTI. The Extracellular segment spans residues 131–234; it reads YYNVIIAYSL…RSSGMNETGV (104 aa). N-linked (GlcNAc...) asparagine glycosylation is found at N155, N163, N174, N189, N197, N202, and N230. The next 2 helical transmembrane spans lie at 235–255 and 261–281; these read IVWYLALCLLLAWLIVGAALF and SGKVVYFTALFPYVVLLILLV. An N-linked (GlcNAc...) asparagine glycan is attached at N302. 7 helical membrane passes run 315 to 335, 348 to 368, 399 to 419, 450 to 477, 480 to 500, 528 to 548, and 563 to 583; these read AATQIFYSLSVAWGGLVALSS, IVVCLTNCLTSVFAGFAIFSI, LAQLPGGPFWSILFFFMLLTL, ITLGCCLVLFLLGLVCVTQAGIYWVHLI, FCAGWGILIAAILELVGIIWI, CWFVITPILLIAIFIWSLVQF, and VALGWCMIVFCIIWIPIMAII. Residues 584-642 lie on the Cytoplasmic side of the membrane; that stretch reads KIIQAKGNIFQRLISCCRPASNWGPYLEQHRGERYKDMVDPKKEADHEIPTVSGSRKPE. A compositionally biased stretch (basic and acidic residues) spans 622-632; that stretch reads VDPKKEADHEI. The disordered stretch occupies residues 622–642; it reads VDPKKEADHEIPTVSGSRKPE.

It belongs to the sodium:neurotransmitter symporter (SNF) (TC 2.A.22) family. SLC6A14 subfamily. Levels are highest in adult and fetal lung, in trachea and salivary gland. Lower levels detected in mammary gland, stomach and pituitary gland, and very low levels in colon, uterus, prostate and testis.

The protein resides in the membrane. It is found in the apical cell membrane. It catalyses the reaction glycine(out) + chloride(out) + 2 Na(+)(out) = glycine(in) + chloride(in) + 2 Na(+)(in). The catalysed reaction is L-leucine(out) + chloride(out) + 2 Na(+)(out) = L-leucine(in) + chloride(in) + 2 Na(+)(in). It carries out the reaction L-glutamine(out) + chloride(out) + 2 Na(+)(out) = L-glutamine(in) + chloride(in) + 2 Na(+)(in). The enzyme catalyses L-arginine(out) + chloride(out) + 2 Na(+)(out) = L-arginine(in) + chloride(in) + 2 Na(+)(in). It catalyses the reaction (R)-carnitine(out) + chloride(out) + 2 Na(+)(out) = (R)-carnitine(in) + chloride(in) + 2 Na(+)(in). The catalysed reaction is O-butanoyl-(R)-carnitine(out) + chloride(out) + 2 Na(+)(out) = O-butanoyl-(R)-carnitine(in) + chloride(in) + 2 Na(+)(in). It carries out the reaction O-propanoyl-(R)-carnitine(out) + chloride(out) + 2 Na(+)(out) = O-propanoyl-(R)-carnitine(in) + chloride(in) + 2 Na(+)(in). The enzyme catalyses L-isoleucine(out) + chloride(out) + 2 Na(+)(out) = L-isoleucine(in) + chloride(in) + 2 Na(+)(in). It catalyses the reaction L-methionine(out) + chloride(out) + 2 Na(+)(out) = L-methionine(in) + chloride(in) + 2 Na(+)(in). The catalysed reaction is L-valine(out) + chloride(out) + 2 Na(+)(out) = L-valine(in) + chloride(in) + 2 Na(+)(in). It carries out the reaction L-alanine(out) + chloride(out) + 2 Na(+)(out) = L-alanine(in) + chloride(in) + 2 Na(+)(in). The enzyme catalyses L-serine(out) + chloride(out) + 2 Na(+)(out) = L-serine(in) + chloride(in) + 2 Na(+)(in). It catalyses the reaction L-cysteine(out) + chloride(out) + 2 Na(+)(out) = L-cysteine(in) + chloride(in) + 2 Na(+)(in). The catalysed reaction is L-asparagine(out) + chloride(out) + 2 Na(+)(out) = L-asparagine(in) + chloride(in) + 2 Na(+)(in). It carries out the reaction L-threonine(out) + chloride(out) + 2 Na(+)(out) = L-threonine(in) + chloride(in) + 2 Na(+)(in). The enzyme catalyses L-phenylalanine(out) + chloride(out) + 2 Na(+)(out) = L-phenylalanine(in) + chloride(in) + 2 Na(+)(in). It catalyses the reaction L-tryptophan(out) + chloride(out) + 2 Na(+)(out) = L-tryptophan(in) + chloride(in) + 2 Na(+)(in). The catalysed reaction is L-tyrosine(out) + chloride(out) + 2 Na(+)(out) = L-tyrosine(in) + chloride(in) + 2 Na(+)(in). It carries out the reaction L-histidine(out) + chloride(out) + 2 Na(+)(out) = L-histidine(in) + chloride(in) + 2 Na(+)(in). The enzyme catalyses L-lysine(out) + chloride(out) + 2 Na(+)(out) = L-lysine(in) + chloride(in) + 2 Na(+)(in). It catalyses the reaction beta-alanine(out) + chloride(out) + 2 Na(+)(out) = beta-alanine(in) + chloride(in) + 2 Na(+)(in). Functionally, amino acid transporter that plays an important role in the absorption of amino acids in the intestinal tract. Mediates the uptake of a broad range of neutral and cationic amino acids (with the exception of proline) in a Na(+)/Cl(-)-dependent manner. Transports non-alpha-amino acids such as beta-alanine with low affinity, and has a higher affinity for dipolar and cationic amino acids such as leucine and lysine. Can also transport carnitine, butirylcarnitine and propionylcarnitine coupled to the transmembrane gradients of Na(+) and Cl(-). The protein is Sodium- and chloride-dependent neutral and basic amino acid transporter B(0+) of Homo sapiens (Human).